The chain runs to 463 residues: MTATRIETDTFGPIEVAADRYWGAQAQRSLGNFKIGWEKQPLPVVRALGIVKRAAAEANLALGKLDPKIAETIIAAANEVIEGKLNDHFPLVVWQTGSGTQSNMNANEVISNRAIEMLGGEMGSKKPVHPNDHVNMSQSSNDTFPTAMHIACAEQVVHDLLPALKHLHKALAAKAAEWKDIIKIGRTHTQDATPLTLGQEFGGYAQQIENGIARIEMTLPMLMQLAQGGTAVGTGLNAPVGFAELVAEQIAGITGLGFTTAPNKFEALAAHDAMVFTHGAINTVAASLFKIANDIRFLGSGPRAGLGELSLPENEPGSSIMPGKVNPTQSEALTQVCAQVFGNHSTLTFAGSQGHFELNVFNPVMAYNFLQSVRLVADAAISFTDNCVVGIEPRVDNIKKGVENSLMLVTALNGKLGYDACAKIAKTAHKNGTTLREEAVGGGYLTNEEFEQYVRPEKMISPG.

Residues 98–100 (SGT), 129–132 (HPND), 139–141 (SSN), and Thr187 contribute to the substrate site. The active-site Proton donor/acceptor is the His188. Residue Ser318 is part of the active site. Residues Ser319 and 324–326 (KVN) contribute to the substrate site.

It belongs to the class-II fumarase/aspartase family. Fumarase subfamily. In terms of assembly, homotetramer.

It localises to the cytoplasm. It catalyses the reaction (S)-malate = fumarate + H2O. The protein operates within carbohydrate metabolism; tricarboxylic acid cycle; (S)-malate from fumarate: step 1/1. Functionally, involved in the TCA cycle. Catalyzes the stereospecific interconversion of fumarate to L-malate. The chain is Fumarate hydratase class II from Caulobacter vibrioides (strain ATCC 19089 / CIP 103742 / CB 15) (Caulobacter crescentus).